Here is a 485-residue protein sequence, read N- to C-terminus: Arginine/agmatine antiporter (485 aa).

The next 12 helical transmembrane spans lie at 12 to 34 (GTIALAGMVVSSIIGGGIFSLPQ), 38 to 60 (ATAGAGAVILSWILTGFGMFFIA), 89 to 111 (IGFTIGWGYWLCQIFGNVGYAVI), 126 to 148 (GGNTLPAILGGSILIWVFNFIVL), 155 to 177 (SIINVIGTIFKIIPLIIFIILTA), 211 to 230 (TMLVTLWAFIGIEGAVVMSG), 243 to 265 (VLGFLGCLTIYILFSLLPFGSLF), 291 to 313 (VLMNVGLIIAVLSSWLSWTIIVA), 363 to 385 (WNTMLSITGVMVLPAYLASAAFL), 400 to 422 (IKAPLAMITGILGVVYSLWLIYA), 427 to 446 (YLFMALVLLALGIPFYIDAG), and 461 to 483 (IVGMTFIGLLALTAIFLFSTGRI).

This sequence belongs to the amino acid-polyamine-organocation (APC) superfamily. Basic amino acid/polyamine antiporter (APA) (TC 2.A.3.2) family.

It is found in the cell inner membrane. Catalyzes the exchange of L-arginine for agmatine. The arginine uptake by the bacterium in the macrophage may be a virulence factor against the host innate immune response. In Chlamydia pneumoniae (Chlamydophila pneumoniae), this protein is Arginine/agmatine antiporter (aaxC).